We begin with the raw amino-acid sequence, 137 residues long: Glutamyl-tRNA(Gln) amidotransferase subunit C, chloroplastic/mitochondrial (137 aa).

Belongs to the GatC family. Subunit of the heterotrimeric GatCAB amidotransferase (AdT) complex, composed of A, B and C subunits.

Its subcellular location is the mitochondrion. The protein resides in the plastid. It is found in the chloroplast. It catalyses the reaction L-glutamyl-tRNA(Gln) + L-glutamine + ATP + H2O = L-glutaminyl-tRNA(Gln) + L-glutamate + ADP + phosphate + H(+). Allows the formation of correctly charged Gln-tRNA(Gln) through the transamidation of misacylated Glu-tRNA(Gln) in chloroplasts and mitochondria. The reaction takes place in the presence of glutamine and ATP through an activated gamma-phospho-Glu-tRNA(Gln). This Vitis vinifera (Grape) protein is Glutamyl-tRNA(Gln) amidotransferase subunit C, chloroplastic/mitochondrial.